The chain runs to 232 residues: Cytidylate kinase (232 aa).

A disordered region spans residues 1-21 (MSEDTPLVVAMDGPSGTGKSS). 13 to 21 (GPSGTGKSS) contacts ATP.

This sequence belongs to the cytidylate kinase family. Type 1 subfamily.

The protein localises to the cytoplasm. The catalysed reaction is CMP + ATP = CDP + ADP. The enzyme catalyses dCMP + ATP = dCDP + ADP. The polypeptide is Cytidylate kinase (Nocardia farcinica (strain IFM 10152)).